Reading from the N-terminus, the 623-residue chain is Set1/Ash2 histone methyltransferase complex subunit ASH2 (623 aa).

Positions 1–18 (MAAAGAGPGPGVSAGPGP) are enriched in gly residues. The PHD-type; atypical zinc-finger motif lies at 1 to 62 (MAAAGAGPGP…SGEAESGDAN (62 aa)). Positions 1 to 99 (MAAAGAGPGP…MDTQAGSVDE (99 aa)) are disordered. The span at 36 to 56 (AAGAGEGPSAAPGAEPSSGEA) shows a compositional bias: low complexity. The segment at 63-172 (LVDVSGLETE…MCLSALANLT (110 aa)) is DNA-binding. The segment covering 84–95 (GDTSEVMDTQAG) has biased composition (polar residues). Ser96 carries the post-translational modification Phosphoserine. The C4-type zinc finger occupies 112 to 145 (CGICTKWFTADTFGIDTSSCLPFMTNYSFHCNVC). Residues 230–247 (LVKEHPDPGSKDPEEDYP) show a composition bias toward basic and acidic residues. The interval 230–326 (LVKEHPDPGS…AQRLPPHGYP (97 aa)) is disordered. Over residues 265-277 (NQKQSSAVSASGN) the composition is skewed to polar residues. The segment covering 278–290 (LNGGIAAGSSGKG) has biased composition (gly residues). An Asymmetric dimethylarginine; by PRMT1 and PRMT5 modification is found at Arg291. Residue Ser311 is modified to Phosphoserine. The tract at residues 311 to 623 (SDPLFSAQRL…DGRRSPPWEP (313 aa)) is interaction with RBBP5. The region spanning 355-578 (LDCWAGKPIP…VSINFGPSFK (224 aa)) is the B30.2/SPRY domain.

Interacts with HCFC1. Core component of several methyltransferase-containing complexes including MLL1/MLL, MLL2/3 (also named ASCOM complex) and MLL4/WBP7. Each complex is at least composed of ASH2L, RBBP5, WDR5, DPY30, one or more specific histone methyltransferases (KMT2A/MLL1, KMT2D/MLL2, KMT2C/MLL3 and KMT2B/MLL4), and the facultative components PAGR1, BACC1, CHD8, E2F6, HCFC1, HCFC2, HSP70, INO80C, KDM6A, KANSL1, LAS1L, MAX, MCRS1, MEN1, MGA, KAT8/MOF, NCOA6, PAXIP1/PTIP, PELP1, PHF20, PRP31, RING2, RUVB1/TIP49A, RUVB2/TIP49B, SENP3, TAF1, TAF4, TAF6, TAF7, TAF9, TEX10 and alpha- and beta-tubulin. Component of the SET1 complex, at least composed of the catalytic subunit (SETD1A or SETD1B), WDR5, WDR82, RBBP5, ASH2L/ASH2, CXXC1/CFP1, HCFC1 and DPY30. Found in a complex with RBBP5, ASH2L, DPY30, KMT2A, KMT2D and WDR5. Component of a histone methylation complex composed of at least ZNF335, RBBP5, ASH2L and WDR5; the complex may have histone H3-specific methyltransferase activity, however does not have specificity for 'Lys-4' of histone H3. Within the complex, interacts with ZNF335. Interacts with RBBP5. Components of this complex may associate with components of a nuclear receptor-mediated transcription complex to form a complex at least composed of ZNF335, HCFC1, CCAR2, EMSY, MKI67, RBBP5, ASH2L and WDR5. Within this complex also interacts with CCAR2 and EMSY. Interacts with DPY30. Interacts with SETD1A and SETD1B. Post-translationally, both monomethylated and dimethylated on arginine residues in the C-terminus. Arg-291 is the major site. Methylation is not required for nuclear localization, nor for MLL complex integrity or maintenance of global histone H3K4me3 levels. Ubiquitously expressed, with abundant expression in the heart, skeletal muscle and kidney. Low expression is seen in spleen, lung and testis.

It is found in the nucleus. Transcriptional regulator. Component or associated component of some histone methyltransferase complexes which regulates transcription through recruitment of those complexes to gene promoters. Component of the Set1/Ash2 histone methyltransferase (HMT) complex, a complex that specifically methylates 'Lys-4' of histone H3, but not if the neighboring 'Lys-9' residue is already methylated. As part of the MLL1/MLL complex it is involved in methylation and dimethylation at 'Lys-4' of histone H3. May play a role in hematopoiesis. In association with RBBP5 and WDR5, stimulates the histone methyltransferase activities of KMT2A, KMT2B, KMT2C, KMT2D, SETD1A and SETD1B. This Mus musculus (Mouse) protein is Set1/Ash2 histone methyltransferase complex subunit ASH2 (Ash2l).